The sequence spans 546 residues: MLGQMMRNQLVIGSLVEHAARYHGAREVVSVETSGEVTRSCWKEVELRARKLASALGKMGLTPSDRCATIAWNNIRHLEVYYAVSGAGMVCHTINPRLFIEQITYVINHAEDKVVLLDDTFLPIIAEIHGSLPKVKAFVLMAHNNSNASAQMPGLIAYEDLIGQGDDNYIWPDVDENEASSLCYTSGTTGNPKGVLYSHRSTVLHSMTTAMPDTLNLSARDTILPVVPMFHVNAWGTPYSAAMVGAKLVLPGPALDGASLSKLIASEGVSIALGVPVVWQGLLAAQAGNGSKSQSLTRVVVGGSACPASMIREFNDIYGVEVIHAWGMTELSPFGTANTPLAHHVDLSPDEKLSLRKSQGRPPYGVELKIVNDEGIRLPEDGRSKGNLMARGHWVIKDYFHSDPGSTLSDGWFSTGDVATIDSDGFMTICDRAKDIIKSGGEWISTVELESIAIAHPHIVDAAVIAARHEKWDERPLLIAVKSPNSELTSGEVCNYFADKVARWQIPDAAIFVEELPRNGTGKILKNRLREKYGDILLRSSSSVCE.

A Mg(2+)-binding site is contributed by threonine 185. Residues tryptophan 235 and threonine 329 each coordinate ATP. Position 330 (glutamate 330) interacts with Mg(2+). ATP contacts are provided by aspartate 417, lysine 434, lysine 438, and tryptophan 443.

This sequence belongs to the ATP-dependent AMP-binding enzyme family.

It is found in the cytoplasm. It catalyses the reaction a medium-chain fatty acid + ATP + CoA = a medium-chain fatty acyl-CoA + AMP + diphosphate. It functions in the pathway lipid metabolism; fatty acid metabolism. The protein is Medium-chain-fatty-acid--CoA ligase of Ectopseudomonas oleovorans (Pseudomonas oleovorans).